The primary structure comprises 392 residues: Selenide, water dikinase 1 (392 aa).

N-acetylserine is present on S2. Residue C31 is part of the active site. Residues K32, G67 to D69, D87, D110, and G161 to T164 contribute to the ATP site. D69 serves as a coordination point for Mg(2+). Mg(2+) is bound at residue D110. Residue D265 participates in Mg(2+) binding.

The protein belongs to the selenophosphate synthase 1 family. Class II subfamily. In terms of assembly, homodimer. Heterodimer with isoform 3. As to quaternary structure, homodimer. Heterodimer with isoform 4. Homodimer. Heterodimer with isoform 1. In terms of assembly, homodimer. Heterodimer with isoform 2. Mg(2+) is required as a cofactor. In terms of tissue distribution, gradually expressed during the cell cycle until G2/M phase and then decreases. Gradually expressed during the cell cycle until S phase and then decreases.

Its subcellular location is the cell membrane. It is found in the nucleus membrane. It localises to the cytoplasm. It catalyses the reaction hydrogenselenide + ATP + H2O = selenophosphate + AMP + phosphate + 2 H(+). Its activity is regulated as follows. Activated by phosphate ions and by potassium ions. In terms of biological role, synthesizes selenophosphate from selenide and ATP. The chain is Selenide, water dikinase 1 (SEPHS1) from Homo sapiens (Human).